Here is a 56-residue protein sequence, read N- to C-terminus: uncharacterized protein (56 aa).

The segment covering 21-38 (HTHTPHPHHTHTHTHHTP) has biased composition (basic residues). Residues 21–40 (HTHTPHPHHTHTHTHHTPTH) form a disordered region.

This is an uncharacterized protein from Saccharomyces cerevisiae (strain ATCC 204508 / S288c) (Baker's yeast).